The following is a 547-amino-acid chain: Cytochrome P450 monooxygenase oblB (547 aa).

Transmembrane regions (helical) follow at residues 42–62 (GAVG…RLFL) and 242–262 (FDMF…PWLI). A glycan (N-linked (GlcNAc...) asparagine) is linked at N277. Residues 345–365 (VLIGSGTMTTAGTMGFLCYYI) form a helical membrane-spanning segment. C489 is a heme binding site.

Belongs to the cytochrome P450 family. Requires heme as cofactor.

It localises to the membrane. It catalyses the reaction ophiobolin F + 4 reduced [NADPH--hemoprotein reductase] + 4 O2 = ophiobolin C + 4 oxidized [NADPH--hemoprotein reductase] + 6 H2O + 4 H(+). It participates in secondary metabolite biosynthesis; terpenoid biosynthesis. Its function is as follows. Cytochrome P450 monooxygenase; part of the gene cluster that mediates the biosynthesis of the sesterterpenes ophiobolins, fungal phytotoxins with potential anti-cancer activities. The first step of the pathway is performed by the sesterterpene synthase oblA that possesses both prenyl transferase and terpene cyclase activity, converting isopentenyl diphosphate and dimethylallyl diphosphate into geranylfarnesyl diphosphate (GFPP) and further converting GFPP into ophiobolin F, respectively. Other sesterterpenoids (C(25) terpenoids) are found as minor products of oblA. The cytochrome P450 monooxygenase oblB then catalyzes a four-step oxidative transformation of ophiobolin F to yield ophiobolin C. The function of the cytochrome P450 monooxygenase oblE has still to be determined. The chain is Cytochrome P450 monooxygenase oblB from Emericella variicolor (Aspergillus stellatus).